The sequence spans 505 residues: Chromosomal replication initiator protein DnaA (505 aa).

Positions 1–90 (MSVELWQQCV…RRSSAPRAAP (90 aa)) are domain I, interacts with DnaA modulators. Residues 91–168 (NAPVSAAVAA…QVEGALKHTS (78 aa)) are domain II. The domain III, AAA+ region stretch occupies residues 169–385 (YLNRTFTFDT…GALKRVIAHS (217 aa)). Residues G213, G215, K216, and T217 each coordinate ATP. The interval 386-505 (HFMGRDITIE…YKNLLRTLTT (120 aa)) is domain IV, binds dsDNA.

It belongs to the DnaA family. In terms of assembly, oligomerizes as a right-handed, spiral filament on DNA at oriC.

The protein localises to the cytoplasm. Its function is as follows. Plays an essential role in the initiation and regulation of chromosomal replication. ATP-DnaA binds to the origin of replication (oriC) to initiate formation of the DNA replication initiation complex once per cell cycle. Binds the DnaA box (a 9 base pair repeat at the origin) and separates the double-stranded (ds)DNA. Forms a right-handed helical filament on oriC DNA; dsDNA binds to the exterior of the filament while single-stranded (ss)DNA is stabiized in the filament's interior. The ATP-DnaA-oriC complex binds and stabilizes one strand of the AT-rich DNA unwinding element (DUE), permitting loading of DNA polymerase. After initiation quickly degrades to an ADP-DnaA complex that is not apt for DNA replication. Binds acidic phospholipids. The sequence is that of Chromosomal replication initiator protein DnaA from Pseudomonas putida (strain ATCC 700007 / DSM 6899 / JCM 31910 / BCRC 17059 / LMG 24140 / F1).